We begin with the raw amino-acid sequence, 213 residues long: MLKNIFYIIMGPPGSGKGTQSQCLAEKLGLPHISSGNLLRSAIKASTPLGIKASEYIDEGQLVPNGLVWEIVQETLNKSECLSGCIIDGFPRTLDQAVLLHDFLVKANADYRVIQLDVADEEIIRRIYSRFICPSCNFVYNQSQGFRECPTCHSELVRRSDDTLEVIQKRLESYKNTTASVIDYYADLGKLTCVPAEKSPDEVFQSILACIED.

Position 14 to 19 (14 to 19 (GSGKGT)) interacts with ATP. The NMP stretch occupies residues 34 to 63 (SSGNLLRSAIKASTPLGIKASEYIDEGQLV). AMP contacts are provided by residues S35, R40, 61 to 63 (QLV), 89 to 92 (GFPR), and Q96. Residues 129-162 (SRFICPSCNFVYNQSQGFRECPTCHSELVRRSDD) are LID. Residue R130 participates in ATP binding. C133 and C136 together coordinate Zn(2+). 139–140 (VY) lines the ATP pocket. Positions 149 and 152 each coordinate Zn(2+). AMP-binding residues include R159 and R170. ATP is bound at residue K198.

It belongs to the adenylate kinase family. Monomer.

Its subcellular location is the cytoplasm. The catalysed reaction is AMP + ATP = 2 ADP. It functions in the pathway purine metabolism; AMP biosynthesis via salvage pathway; AMP from ADP: step 1/1. Its function is as follows. Catalyzes the reversible transfer of the terminal phosphate group between ATP and AMP. Plays an important role in cellular energy homeostasis and in adenine nucleotide metabolism. The polypeptide is Adenylate kinase (Chlamydia felis (strain Fe/C-56) (Chlamydophila felis)).